The following is a 323-amino-acid chain: Methionyl-tRNA formyltransferase (323 aa).

Residue 121-124 (SLLP) coordinates (6S)-5,6,7,8-tetrahydrofolate.

The protein belongs to the Fmt family.

The catalysed reaction is L-methionyl-tRNA(fMet) + (6R)-10-formyltetrahydrofolate = N-formyl-L-methionyl-tRNA(fMet) + (6S)-5,6,7,8-tetrahydrofolate + H(+). Its function is as follows. Attaches a formyl group to the free amino group of methionyl-tRNA(fMet). The formyl group appears to play a dual role in the initiator identity of N-formylmethionyl-tRNA by promoting its recognition by IF2 and preventing the misappropriation of this tRNA by the elongation apparatus. This chain is Methionyl-tRNA formyltransferase, found in Desulfotalea psychrophila (strain LSv54 / DSM 12343).